The following is a 54-amino-acid chain: UPF0391 membrane protein R00741 (54 aa).

2 helical membrane-spanning segments follow: residues 5 to 25 (ALVF…GIAG) and 30 to 50 (IAQV…VAGL).

This sequence belongs to the UPF0391 family.

It is found in the cell membrane. This Rhizobium meliloti (strain 1021) (Ensifer meliloti) protein is UPF0391 membrane protein R00741.